Here is a 385-residue protein sequence, read N- to C-terminus: tRNA-specific 2-thiouridylase MnmA (385 aa).

ATP contacts are provided by residues 18–25 and L44; that span reads AMSGGVDS. C112 serves as the catalytic Nucleophile. C112 and C209 are oxidised to a cystine. G136 is a binding site for ATP. Residues 159–161 form an interaction with tRNA region; it reads RDQ. Catalysis depends on C209, which acts as the Cysteine persulfide intermediate.

This sequence belongs to the MnmA/TRMU family.

The protein resides in the cytoplasm. The enzyme catalyses S-sulfanyl-L-cysteinyl-[protein] + uridine(34) in tRNA + AH2 + ATP = 2-thiouridine(34) in tRNA + L-cysteinyl-[protein] + A + AMP + diphosphate + H(+). Its function is as follows. Catalyzes the 2-thiolation of uridine at the wobble position (U34) of tRNA, leading to the formation of s(2)U34. This chain is tRNA-specific 2-thiouridylase MnmA, found in Methylorubrum extorquens (strain PA1) (Methylobacterium extorquens).